The chain runs to 101 residues: Signal recognition particle 19 kDa protein (101 aa).

It belongs to the SRP19 family. As to quaternary structure, part of the signal recognition particle protein translocation system, which is composed of SRP and FtsY. Archaeal SRP consists of a 7S RNA molecule of 300 nucleotides and two protein subunits: SRP54 and SRP19.

It localises to the cytoplasm. Functionally, involved in targeting and insertion of nascent membrane proteins into the cytoplasmic membrane. Binds directly to 7S RNA and mediates binding of the 54 kDa subunit of the SRP. This chain is Signal recognition particle 19 kDa protein, found in Methanosarcina mazei (strain ATCC BAA-159 / DSM 3647 / Goe1 / Go1 / JCM 11833 / OCM 88) (Methanosarcina frisia).